Reading from the N-terminus, the 237-residue chain is Flagellar L-ring protein (237 aa).

An N-terminal signal peptide occupies residues 1–24; the sequence is MNRLSVPRFSVLIASLCGITLLSG. Residue cysteine 25 is the site of N-palmitoyl cysteine attachment. Cysteine 25 carries the S-diacylglycerol cysteine lipid modification.

This sequence belongs to the FlgH family. As to quaternary structure, the basal body constitutes a major portion of the flagellar organelle and consists of four rings (L,P,S, and M) mounted on a central rod.

It localises to the cell outer membrane. The protein resides in the bacterial flagellum basal body. Functionally, assembles around the rod to form the L-ring and probably protects the motor/basal body from shearing forces during rotation. This chain is Flagellar L-ring protein, found in Pseudomonas syringae pv. syringae (strain B728a).